Here is a 101-residue protein sequence, read N- to C-terminus: UPF0235 protein MmarC7_0309 (101 aa).

This sequence belongs to the UPF0235 family.

The sequence is that of UPF0235 protein MmarC7_0309 from Methanococcus maripaludis (strain C7 / ATCC BAA-1331).